A 263-amino-acid chain; its full sequence is Putative inactive caspase B (263 aa).

A propeptide spans 1-8 (MMCEDASD) (removed in mature form by cps-1 or ced-3).

It belongs to the peptidase C14A family. As to quaternary structure, interacts with ced-3 (via large subunit p17 or small subunit p13); the interaction inhibits ced-3 autoactivation. Cleavage by csp-1 isoform b or ced-3 removes the propeptide and generates subunit p31 in vitro. An additional cleavage at Asp-149 generates the 2 subunits p17 and p14 but this cleavage appears to be less efficient. Specifically expressed in the hermaphrodite germline.

It localises to the cytoplasm. Functionally, putative inactive caspase. In the germline, binds caspase ced-3 zymogen and prevents ced-3 autoactivation. Does not affect the caspase activity of mature ced-3 and ced-4-mediated mature ced-3 activation. Negatively regulates germline apoptosis by inhibiting autocleavage of caspase ced-3. Involved in fertility. In terms of biological role, putative inactive caspase. Dispensable for the inhibition of germline apoptosis. The sequence is that of Putative inactive caspase B from Caenorhabditis elegans.